Reading from the N-terminus, the 628-residue chain is Leucine-rich repeat and fibronectin type-III domain-containing protein 3 (628 aa).

The signal sequence occupies residues 1 to 16 (MAVLPLLLCLLPLAPA). The Extracellular portion of the chain corresponds to 17–540 (SSPSQPATPS…APHAPFLGGT (524 aa)). An LRRNT domain is found at 19-59 (PSQPATPSPCPRRCRCQTQSLPLSVLCPGAGLLFVPPSLDR). LRR repeat units follow at residues 84–105 (GLLH…AFAD), 108–129 (ALRA…QLRG), 132–153 (NLRH…ALDD), 157–178 (TLED…ALGR), 181–202 (NVNT…AFSR), and 205–226 (KLAR…PLFS). In terms of domain architecture, LRRCT spans 249 to 295 (NPLHCNCELVWLRRLAREDDLEACASPPALGGRYFWAVGEEEFVCEP). The region spanning 295-382 (PPVVTHRSPP…GEATAAVELT (88 aa)) is the Ig-like domain. A disulfide bond links Cys-317 and Cys-366. Residues Asn-348 and Asn-393 are each glycosylated (N-linked (GlcNAc...) asparagine). The tract at residues 380–432 (ELTVGPPPPPQLANSTSCDPPRDGDPDALTPPSAASASAAAKAADTGPPTDRG) is disordered. Positions 406–429 (DALTPPSAASASAAAKAADTGPPT) are enriched in low complexity. The 99-residue stretch at 427–525 (PPTDRGVQVT…GCARFSTEPA (99 aa)) folds into the Fibronectin type-III domain. The helical transmembrane segment at 541-561 (MIIALGGVIVASVLVFIFVLL) threads the bilayer. Topologically, residues 562 to 628 (MRYKVHGGQP…WRPSHEPTGP (67 aa)) are cytoplasmic. Residues 587–628 (QTNGSLGPTPAPPAPEPAAPRAHTVVQLDCEPWRPSHEPTGP) are disordered. Over residues 595-604 (TPAPPAPEPA) the composition is skewed to pro residues. Residues 617-628 (EPWRPSHEPTGP) show a composition bias toward basic and acidic residues.

It belongs to the LRFN family. Can form heteromeric complexes with LRFN1, LRFN2, LRFN4 and LRFN5. Able to form homomeric complexes across cell junctions, between adjacent cells. Does not interact with DLG4. Post-translationally, N-glycosylated.

Its subcellular location is the cell membrane. The protein localises to the cell projection. It is found in the axon. It localises to the dendrite. The protein resides in the synapse. Its subcellular location is the presynaptic cell membrane. The protein localises to the postsynaptic cell membrane. Its function is as follows. Cell adhesion molecule that mediates homophilic cell-cell adhesion in a Ca(2+)-independent manner. Promotes neurite outgrowth in hippocampal neurons. In Ailuropoda melanoleuca (Giant panda), this protein is Leucine-rich repeat and fibronectin type-III domain-containing protein 3 (LRFN3).